A 291-amino-acid polypeptide reads, in one-letter code: 3-hydroxy-5-phosphonooxypentane-2,4-dione thiolase (291 aa).

Lysine 203 (schiff-base intermediate with substrate) is an active-site residue.

Belongs to the DeoC/FbaB aldolase family. As to quaternary structure, homodecamer.

The protein localises to the cytoplasm. It catalyses the reaction dihydroxyacetone phosphate + acetyl-CoA = 3-hydroxy-2,4-dioxopentyl phosphate + CoA. Involved in the degradation of phospho-AI-2, thereby terminating induction of the lsr operon and closing the AI-2 signaling cycle. Catalyzes the transfer of an acetyl moiety from 3-hydroxy-5-phosphonooxypentane-2,4-dione to CoA to form glycerone phosphate and acetyl-CoA. This chain is 3-hydroxy-5-phosphonooxypentane-2,4-dione thiolase, found in Escherichia coli O139:H28 (strain E24377A / ETEC).